Consider the following 587-residue polypeptide: Formate--tetrahydrofolate ligase (587 aa).

73–80 (TPLGEGKS) is a binding site for ATP.

It belongs to the formate--tetrahydrofolate ligase family.

It carries out the reaction (6S)-5,6,7,8-tetrahydrofolate + formate + ATP = (6R)-10-formyltetrahydrofolate + ADP + phosphate. It participates in one-carbon metabolism; tetrahydrofolate interconversion. In Syntrophobacter fumaroxidans (strain DSM 10017 / MPOB), this protein is Formate--tetrahydrofolate ligase.